The primary structure comprises 719 residues: MALKDYALEKEKVKKFLQEFYQDDELGKKQFKYGNQLVRLAHREQVALYVDLDDVAEDDPELVDSICENARRYAKLFADAVQELLPQYKEREVVNKDVLDVYIEHRLMMEQRSRDPGMVRSPQNQYPAELMRRFELYFQGPSSNKPRVIREVRADSVGKLVTVRGIVTRVSEVKPKMVVATYTCDQCGAETYQPIQSPTFMPLIMCPSQECQTNRSGGRLYLQTRGSRFIKFQEMKMQEHSDQVPVGNIPRSITVLVEGENTRIAQPGDHVSVTGIFLPILRTGFRQVVQGLLSETYLEAHRIVKMNKSEDDESGAGELTREELRQIAEEDFYEKLAASIAPEIYGHEDVKKALLLLLVGGVDQSPRGMKIRGNINICLMGDPGVAKSQLLSYIDRLAPRSQYTTGRGSSGVGLTAAVLRDSVSGELTLEGGALVLADQGVCCIDEFDKMAEADRTAIHEVMEQQTISIAKAGILTTLNARCSILAAANPAYGRYNPRRSLEQNIQLPAALLSRFDLLWLIQDRPDRDNDLRLAQHITYVHQHSRQPPSQFEPLDMKLMRRYIAMCREKQPMVPESLADYITAAYVEMRREAWASKDATYTSARTLLAILRLSTALARLRMVDVVEKEDVNEAIRLMEMSKDSLLGDKGQTARTQRPADVIFATVRELVSGGRSVRFSEAEQRCVSRGFTPAQFQAALDEYEELNVWQVNASRTRITFV.

N-acetylalanine is present on Ala-2. Residues Lys-15 and Lys-28 each participate in a glycyl lysine isopeptide (Lys-Gly) (interchain with G-Cter in SUMO2) cross-link. 2 positions are modified to phosphoserine: Ser-121 and Ser-314. In terms of domain architecture, MCM spans 332–538; sequence FYEKLAASIA…NDLRLAQHIT (207 aa). An ATP-binding site is contributed by Tyr-345. Ser-365 is modified (phosphoserine). ATP is bound by residues Gly-384, Ala-386, Lys-387, Ser-388, and Asn-489. Phosphoserine is present on Ser-500. Positions 513 to 516 match the Arginine finger motif; it reads SRFD. Arg-514 is an ATP binding site. The segment at 521 to 564 is interaction with RAD17; sequence IQDRPDRDNDLRLAQHITYVHQHSRQPPSQFEPLDMKLMRRYIA. Residues 577–719 form an interaction with ATRIP region; it reads LADYITAAYV…NASRTRITFV (143 aa). Arg-604 contacts ATP. Ser-678 carries the phosphoserine modification.

This sequence belongs to the MCM family. Component of the MCM2-7 complex. The complex forms a toroidal hexameric ring with the proposed subunit order MCM2-MCM6-MCM4-MCM7-MCM3-MCM5. Component of the CMG helicase complex, a hexameric ring of related MCM2-7 subunits stabilized by CDC45 and the tetrameric GINS complex. Interacts with the ATR-ATRIP complex and with RAD17. Interacts with TIPIN. Interacts with MCMBP. Interacts with ANKRD17. Component of the replisome complex composed of at least DONSON, MCM2, MCM7, PCNA and TICRR. O-glycosylated (O-GlcNAcylated), in a cell cycle-dependent manner. In terms of processing, ubiquitinated by ECS(LRR1) E3 ubiquitin-protein ligase complex when forks converge following formation of DNA interstrand cross-links. During mitosis, ubiquitinated by TRAIP when forks converge following formation of DNA interstrand cross-links. Short ubiquitin chains on MCM7 promote recruitment of DNA glycosylase NEIL3. If the interstrand cross-link cannot be cleaved by NEIL3, the ubiquitin chains continue to grow on MCM7, promoting the unloading of the CMG helicase complex by the VCP/p97 ATPase.

Its subcellular location is the nucleus. It is found in the chromosome. The catalysed reaction is ATP + H2O = ADP + phosphate + H(+). In terms of biological role, acts as a component of the MCM2-7 complex (MCM complex) which is the replicative helicase essential for 'once per cell cycle' DNA replication initiation and elongation in eukaryotic cells. Core component of CDC45-MCM-GINS (CMG) helicase, the molecular machine that unwinds template DNA during replication, and around which the replisome is built. The active ATPase sites in the MCM2-7 ring are formed through the interaction surfaces of two neighboring subunits such that a critical structure of a conserved arginine finger motif is provided in trans relative to the ATP-binding site of the Walker A box of the adjacent subunit. The six ATPase active sites, however, are likely to contribute differentially to the complex helicase activity. Required for S-phase checkpoint activation upon UV-induced damage. This is DNA replication licensing factor MCM7 from Homo sapiens (Human).